The following is a 271-amino-acid chain: Dipeptidyl-peptidase 6 (271 aa).

SH3b domains follow at residues 1–64 (MNAI…LFDD) and 72–140 (QKAQ…HPKI). The 121-residue stretch at 148–268 (HAFRENVVQT…DLATTITAIG (121 aa)) folds into the NlpC/P60 domain. The Nucleophile role is filled by C178. H224 (proton acceptor) is an active-site residue. H236 is an active-site residue.

This sequence belongs to the peptidase C40 family.

The protein localises to the cytoplasm. Involved in cell sporulation. Hydrolyzes gamma-D-Glu-L-(meso)A2pm linkages only in those peptide units that have a free N-terminal L-alanine. This is Dipeptidyl-peptidase 6 from Lysinibacillus sphaericus (Bacillus sphaericus).